Reading from the N-terminus, the 294-residue chain is Homoserine kinase (294 aa).

83-93 (PLARGLGSSAS) is an ATP binding site.

This sequence belongs to the GHMP kinase family. Homoserine kinase subfamily.

It localises to the cytoplasm. It carries out the reaction L-homoserine + ATP = O-phospho-L-homoserine + ADP + H(+). It functions in the pathway amino-acid biosynthesis; L-threonine biosynthesis; L-threonine from L-aspartate: step 4/5. Catalyzes the ATP-dependent phosphorylation of L-homoserine to L-homoserine phosphate. The polypeptide is Homoserine kinase (Oceanobacillus iheyensis (strain DSM 14371 / CIP 107618 / JCM 11309 / KCTC 3954 / HTE831)).